Consider the following 400-residue polypeptide: Cytoplasmic tRNA 2-thiolation protein 2 (400 aa).

The protein belongs to the CTU2/NCS2 family.

The protein resides in the cytoplasm. It participates in tRNA modification; 5-methoxycarbonylmethyl-2-thiouridine-tRNA biosynthesis. Plays a central role in 2-thiolation of mcm(5)S(2)U at tRNA wobble positions of tRNA(Lys), tRNA(Glu) and tRNA(Gln). May act by forming a heterodimer with NCS6/CTU1 that ligates sulfur from thiocarboxylated URM1 onto the uridine of tRNAs at wobble position. This chain is Cytoplasmic tRNA 2-thiolation protein 2, found in Drosophila virilis (Fruit fly).